The chain runs to 213 residues: ATP phosphoribosyltransferase (213 aa).

The protein belongs to the ATP phosphoribosyltransferase family. Short subfamily. In terms of assembly, heteromultimer composed of HisG and HisZ subunits.

The protein localises to the cytoplasm. The catalysed reaction is 1-(5-phospho-beta-D-ribosyl)-ATP + diphosphate = 5-phospho-alpha-D-ribose 1-diphosphate + ATP. It participates in amino-acid biosynthesis; L-histidine biosynthesis; L-histidine from 5-phospho-alpha-D-ribose 1-diphosphate: step 1/9. In terms of biological role, catalyzes the condensation of ATP and 5-phosphoribose 1-diphosphate to form N'-(5'-phosphoribosyl)-ATP (PR-ATP). Has a crucial role in the pathway because the rate of histidine biosynthesis seems to be controlled primarily by regulation of HisG enzymatic activity. The polypeptide is ATP phosphoribosyltransferase (Listeria monocytogenes serotype 4b (strain F2365)).